The following is a 396-amino-acid chain: Elongation factor Tu (396 aa).

The 196-residue stretch at 10-205 folds into the tr-type G domain; the sequence is KPHVNIGTIG…ACDDSIPDPE (196 aa). Residues 19–26 are G1; the sequence is GHVDHGKT. 19–26 contributes to the GTP binding site; that stretch reads GHVDHGKT. Position 26 (T26) interacts with Mg(2+). Residues 62-66 are G2; it reads GITIN. The tract at residues 83–86 is G3; sequence DAPG. Residues 83–87 and 138–141 contribute to the GTP site; these read DAPGH and NKCD. Residues 138–141 are G4; it reads NKCD. Positions 175–177 are G5; that stretch reads SAL.

It belongs to the TRAFAC class translation factor GTPase superfamily. Classic translation factor GTPase family. EF-Tu/EF-1A subfamily. In terms of assembly, monomer.

It localises to the cytoplasm. The catalysed reaction is GTP + H2O = GDP + phosphate + H(+). GTP hydrolase that promotes the GTP-dependent binding of aminoacyl-tRNA to the A-site of ribosomes during protein biosynthesis. This Corynebacterium diphtheriae (strain ATCC 700971 / NCTC 13129 / Biotype gravis) protein is Elongation factor Tu.